A 272-amino-acid chain; its full sequence is Phosphoglycolate phosphatase 1 (272 aa).

Asp19 (nucleophile) is an active-site residue. Mg(2+) is bound by residues Asp19, Asp21, and Asp182.

Belongs to the HAD-like hydrolase superfamily. CbbY/CbbZ/Gph/YieH family. Mg(2+) serves as cofactor.

The catalysed reaction is 2-phosphoglycolate + H2O = glycolate + phosphate. The protein operates within organic acid metabolism; glycolate biosynthesis; glycolate from 2-phosphoglycolate: step 1/1. Functionally, specifically catalyzes the dephosphorylation of 2-phosphoglycolate. Is involved in the dissimilation of the intracellular 2-phosphoglycolate formed during the DNA repair of 3'-phosphoglycolate ends, a major class of DNA lesions induced by oxidative stress. In Pseudomonas aeruginosa (strain ATCC 15692 / DSM 22644 / CIP 104116 / JCM 14847 / LMG 12228 / 1C / PRS 101 / PAO1), this protein is Phosphoglycolate phosphatase 1.